Consider the following 599-residue polypeptide: Sodium-dependent phosphate transport protein 2C (599 aa).

The Cytoplasmic portion of the chain corresponds to 1-76; it reads MPSSLPGSQV…RRVAGSVLKA (76 aa). A Phosphoserine modification is found at Ser4. The chain crosses the membrane as a helical span at residues 77–97; the sequence is CGLLGSLYFFICSLDVLSSAF. Over 98–111 the chain is Extracellular; that stretch reads QLLGSKVAGDIFKD. The helical transmembrane segment at 112-132 threads the bilayer; sequence NVVLSNPVAGLVIGVLVTALV. Residues 133 to 188 lie on the Cytoplasmic side of the membrane; sequence QSSSTSSSIVVSMVAAKLLTVRVSVPIIMGVNVGTSITSTLVSMAQSGDRDEFQRA. The chain crosses the membrane as a helical span at residues 189–209; the sequence is FSGSAVHGIFNWLTVLVLLPL. Over 210–322 the chain is Extracellular; that stretch reads ESATALLERL…FAGTELTDLA (113 aa). 4 N-linked (GlcNAc...) asparagine glycosylation sites follow: Asn265, Asn268, Asn286, and Asn299. A disulfide bond links Cys276 and Cys309. The chain crosses the membrane as a helical span at residues 323 to 343; the sequence is VGCILLAGSLLVLCGCLVLIV. Topologically, residues 344–367 are cytoplasmic; the sequence is KLLNSVLRGRVAQVVRTVINADFP. A helical transmembrane segment spans residues 368–388; that stretch reads FPLGWLGGYLAVLAGAGLTFA. The Extracellular portion of the chain corresponds to 389–445; that stretch reads LQSSSVFTAAVVPLMGVGVISLDRAYPLLLGSNIGTTTTALLAALASPADRMLSALQ. The helical transmembrane segment at 446–466 threads the bilayer; it reads VALIHFFFNLAGILLWYLVPA. Residues 467 to 485 lie on the Cytoplasmic side of the membrane; it reads LRLPIPLARHFGVVTARYR. A helical membrane pass occupies residues 486-506; sequence WVAGVYLLLGFLLLPLAAFGL. Residues 507-510 are Extracellular-facing; sequence SLAG. A helical membrane pass occupies residues 511-531; that stretch reads GMELAAVGGPLVGLVLLVILV. Over 532 to 599 the chain is Cytoplasmic; that stretch reads TVLQRRRPAW…NPEILASQQL (68 aa).

It belongs to the SLC34A transporter family. Expressed only in the kidney.

It is found in the apical cell membrane. It catalyses the reaction 2 Na(+)(out) + phosphate(out) = 2 Na(+)(in) + phosphate(in). Involved in actively transporting phosphate into cells via Na(+) cotransport in the renal brush border membrane. The cotransport has a Na(+):Pi stoichiometry of 2:1 and is electroneutral. In Homo sapiens (Human), this protein is Sodium-dependent phosphate transport protein 2C (SLC34A3).